The chain runs to 309 residues: 4-hydroxy-tetrahydrodipicolinate synthase (309 aa).

Residue threonine 51 coordinates pyruvate. Residue tyrosine 140 is the Proton donor/acceptor of the active site. The Schiff-base intermediate with substrate role is filled by lysine 168. Isoleucine 209 contributes to the pyruvate binding site.

Belongs to the DapA family. As to quaternary structure, homotetramer; dimer of dimers.

It localises to the cytoplasm. It carries out the reaction L-aspartate 4-semialdehyde + pyruvate = (2S,4S)-4-hydroxy-2,3,4,5-tetrahydrodipicolinate + H2O + H(+). It participates in amino-acid biosynthesis; L-lysine biosynthesis via DAP pathway; (S)-tetrahydrodipicolinate from L-aspartate: step 3/4. Functionally, catalyzes the condensation of (S)-aspartate-beta-semialdehyde [(S)-ASA] and pyruvate to 4-hydroxy-tetrahydrodipicolinate (HTPA). This is 4-hydroxy-tetrahydrodipicolinate synthase from Streptococcus uberis (strain ATCC BAA-854 / 0140J).